The following is a 145-amino-acid chain: Protein phosphatase 1 regulatory subunit 14D (145 aa).

The span at 1 to 14 (MLSSSPASCTSPSP) shows a compositional bias: low complexity. The tract at residues 1–59 (MLSSSPASCTSPSPDGENPCKKVHWASGRRRTSSTDSESKSHPDSSKIPRSRRPSRLTV) is disordered. The interaction with protein phosphatase 1 stretch occupies residues 21–25 (KKVHW). The span at 21 to 32 (KKVHWASGRRRT) shows a compositional bias: basic residues. Positions 37–47 (SESKSHPDSSK) are enriched in basic and acidic residues. The residue at position 58 (threonine 58) is a Phosphothreonine.

It belongs to the PP1 inhibitor family. In terms of processing, phosphorylated on several residues. As to expression, detected in colon, intestine, kidney and brain cortex.

The protein resides in the cytoplasm. Inhibitor of PPP1CA. Has inhibitory activity only when phosphorylated, creating a molecular switch for regulating the phosphorylation status of PPP1CA substrates and smooth muscle contraction. This Homo sapiens (Human) protein is Protein phosphatase 1 regulatory subunit 14D (PPP1R14D).